Reading from the N-terminus, the 98-residue chain is NADH-ubiquinone oxidoreductase chain 4L (98 aa).

Transmembrane regions (helical) follow at residues 1–21, 30–50, and 61–81; these read MSVV…GLLV, LLCL…TVLT, and IILL…LVMI.

It belongs to the complex I subunit 4L family. As to quaternary structure, core subunit of respiratory chain NADH dehydrogenase (Complex I) which is composed of 45 different subunits.

The protein resides in the mitochondrion inner membrane. The enzyme catalyses a ubiquinone + NADH + 5 H(+)(in) = a ubiquinol + NAD(+) + 4 H(+)(out). In terms of biological role, core subunit of the mitochondrial membrane respiratory chain NADH dehydrogenase (Complex I) which catalyzes electron transfer from NADH through the respiratory chain, using ubiquinone as an electron acceptor. Part of the enzyme membrane arm which is embedded in the lipid bilayer and involved in proton translocation. This Lontra canadensis (North American river otter) protein is NADH-ubiquinone oxidoreductase chain 4L (MT-ND4L).